Consider the following 441-residue polypeptide: Xaa-Pro aminopeptidase (441 aa).

The Mn(2+) site is built by Asp-261, Asp-272, His-355, Glu-384, and Glu-407.

This sequence belongs to the peptidase M24B family. In terms of assembly, homotetramer. The cofactor is Mn(2+).

The protein localises to the cytoplasm. It carries out the reaction Release of any N-terminal amino acid, including proline, that is linked to proline, even from a dipeptide or tripeptide.. The polypeptide is Xaa-Pro aminopeptidase (pepP) (Escherichia coli (strain K12)).